We begin with the raw amino-acid sequence, 344 residues long: N-acetyl-gamma-glutamyl-phosphate reductase (344 aa).

Cys-149 is an active-site residue.

It belongs to the NAGSA dehydrogenase family. Type 1 subfamily.

Its subcellular location is the cytoplasm. It carries out the reaction N-acetyl-L-glutamate 5-semialdehyde + phosphate + NADP(+) = N-acetyl-L-glutamyl 5-phosphate + NADPH + H(+). The protein operates within amino-acid biosynthesis; L-arginine biosynthesis; N(2)-acetyl-L-ornithine from L-glutamate: step 3/4. Catalyzes the NADPH-dependent reduction of N-acetyl-5-glutamyl phosphate to yield N-acetyl-L-glutamate 5-semialdehyde. In Halorhodospira halophila (strain DSM 244 / SL1) (Ectothiorhodospira halophila (strain DSM 244 / SL1)), this protein is N-acetyl-gamma-glutamyl-phosphate reductase.